Here is a 69-residue protein sequence, read N- to C-terminus: UPF0150 protein AF_1072 (69 aa).

Belongs to the UPF0150 family.

The protein is UPF0150 protein AF_1072 of Archaeoglobus fulgidus (strain ATCC 49558 / DSM 4304 / JCM 9628 / NBRC 100126 / VC-16).